We begin with the raw amino-acid sequence, 473 residues long: 7-dehydrocholesterol reductase (473 aa).

The interval 1–20 is disordered; that stretch reads MGERRRANASRGDKKVANGE. Helical transmembrane passes span 36 to 56, 97 to 117, 175 to 195, 264 to 284, 304 to 324, and 329 to 349; these read FSLASVIFLLAFAPLIVYYFV, IYLAWVSFQVFLYMFLPDILH, WIPLLWCANLLGYSVATFALV, VTNSMILVNVLQAIYVVDFFW, LGWGDCVWLPYLYTLQGLYLV, and ELSTTAAVAVLLLGLIGYYIF. Residues K356, R360, M393, W398, and 405–406 each bind NADP(+); that span reads NY. Residues 419 to 439 form a helical membrane-spanning segment; that stretch reads ACGFDHLLPYFYFIYMTILLV. Residues D445, 449–453, and Y460 contribute to the NADP(+) site; that span reads CSSKY.

The protein belongs to the ERG4/ERG24 family.

It is found in the endoplasmic reticulum membrane. The enzyme catalyses cholesterol + NADP(+) = 7-dehydrocholesterol + NADPH + H(+). It catalyses the reaction 7-dehydrodesmosterol + NADPH + H(+) = desmosterol + NADP(+). It functions in the pathway steroid biosynthesis; cholesterol biosynthesis. Its function is as follows. Catalyzes the last step of the cholesterol synthesis pathway, which transforms cholesta-5,7-dien-3beta-ol (7-dehydrocholesterol,7-DHC) into cholesterol by reducing the C7-C8 double bond of its sterol core. Can also metabolize cholesta-5,7,24-trien-3beta-ol (7-dehydrodemosterol, 7-DHD) to desmosterol, which is then metabolized by the Delta(24)-sterol reductase (DHCR24) to cholesterol. Modulates ferroptosis (a form of regulated cell death driven by iron-dependent lipid peroxidation) through the metabolic breakdown of the anti-ferroptotic metabolites 7-DHC and 7-DHD which, when accumulated, divert the propagation of peroxyl radical-mediated damage from phospholipid components to its sterol core, protecting plasma and mitochondrial membranes from phospholipid autoxidation. This chain is 7-dehydrocholesterol reductase (dhcr7), found in Xenopus laevis (African clawed frog).